Reading from the N-terminus, the 122-residue chain is UPF0102 protein CPF_1959 (122 aa).

It belongs to the UPF0102 family.

The polypeptide is UPF0102 protein CPF_1959 (Clostridium perfringens (strain ATCC 13124 / DSM 756 / JCM 1290 / NCIMB 6125 / NCTC 8237 / Type A)).